A 500-amino-acid chain; its full sequence is Na(+)/H(+) antiporter NhaB (500 aa).

12 helical membrane-spanning segments follow: residues 34–54 (LLLATLGPVVTGWVLVIQFIF), 58–78 (MALKCYPLMPGGLLLVEALLL), 96–116 (VILLLMFMVAGIHFMKELLLF), 129–149 (AVLSLLFCVLSAFLSAFLDAL), 150–170 (TVTAVIISAAVGFYAVYHRVA), 205–225 (LLMHGAVGTALGGVCTLVGEP), 241–261 (FFLKVAPVSMPVLAAGLVTCV), 311–331 (ILIVCLGLHIAEVGLIGLMVI), 350–370 (FQDAMPFTALLVVFFAVVAVI), 394–414 (MLYLANGLLSAISDNVFVATI), 450–470 (ATPNGQAAFLFLLTSAIAPLI), and 477–497 (MVWMALPYTVVMGGLGWWAVT).

This sequence belongs to the NhaB Na(+)/H(+) (TC 2.A.34) antiporter family.

It is found in the cell inner membrane. It carries out the reaction 2 Na(+)(in) + 3 H(+)(out) = 2 Na(+)(out) + 3 H(+)(in). In terms of biological role, na(+)/H(+) antiporter that extrudes sodium in exchange for external protons. In Pseudomonas entomophila (strain L48), this protein is Na(+)/H(+) antiporter NhaB.